Reading from the N-terminus, the 140-residue chain is Large ribosomal subunit protein uL14x/uL14z/uL14y (140 aa).

The protein belongs to the universal ribosomal protein uL14 family.

This Arabidopsis thaliana (Mouse-ear cress) protein is Large ribosomal subunit protein uL14x/uL14z/uL14y (RPL23A).